The following is a 681-amino-acid chain: Mitosis inhibitor nif1 (681 aa).

The tract at residues 22–43 (LNKKDGNDDDKAEHSKRSGYHG) is disordered. Positions 23 to 37 (NKKDGNDDDKAEHSK) are enriched in basic and acidic residues. At Ser-70 the chain carries Phosphoserine. Disordered regions lie at residues 80 to 104 (TTSG…SSPF) and 182 to 324 (YYHE…SSRQ). Low complexity predominate over residues 92-103 (ESPASPAEASSP). A compositionally biased stretch (polar residues) spans 191–203 (TASNTSPTPNSIK). Ser-196 is modified (phosphoserine). A compositionally biased stretch (low complexity) spans 238–278 (SSGDSTPLSGSSSSKGMLMSMSTSENHSLSSNPELSNSNLL). A compositionally biased stretch (basic and acidic residues) spans 296-306 (SSKEPDKEHST). 2 Sel1-like repeats span residues 547–582 (ALIL…AWGD) and 583–618 (ADAQ…FQGI).

Its subcellular location is the cytoplasm. Its function is as follows. Functions as a negative regulator of mitosis. It interacts with the C-terminal of nim1, thereby inhibiting its kinase activity which phosphorylates wee1. This is Mitosis inhibitor nif1 (nif1) from Schizosaccharomyces pombe (strain 972 / ATCC 24843) (Fission yeast).